The primary structure comprises 156 residues: Nucleoredoxin-like protein 2 (156 aa).

One can recognise a Thioredoxin domain in the interval 9-147 (HLVTCKGATV…LACFQDWVEA (139 aa)).

Belongs to the nucleoredoxin family.

Functionally, may be involved in the maintenance of both the function and the viability of sensory neurons, including photoreceptors and olfactory neurons. In Homo sapiens (Human), this protein is Nucleoredoxin-like protein 2 (NXNL2).